Consider the following 708-residue polypeptide: Polyribonucleotide nucleotidyltransferase (708 aa).

Positions 485 and 491 each coordinate Mg(2+). The 60-residue stretch at 552-611 folds into the KH domain; sequence PKTYIMSIPPDKIRDVIGSGGKVINKIIAETGVKIDIKEDGKIFVMSEDSEGAKKALKII. An S1 motif domain is found at 621 to 689; that stretch reads GEIYLGKVTK…NQGRINLSRK (69 aa). Positions 689 to 708 are disordered; the sequence is KDAIKDSEKKEQNEKDVQKK.

It belongs to the polyribonucleotide nucleotidyltransferase family. Requires Mg(2+) as cofactor.

The protein resides in the cytoplasm. The enzyme catalyses RNA(n+1) + phosphate = RNA(n) + a ribonucleoside 5'-diphosphate. Functionally, involved in mRNA degradation. Catalyzes the phosphorolysis of single-stranded polyribonucleotides processively in the 3'- to 5'-direction. The sequence is that of Polyribonucleotide nucleotidyltransferase from Clostridium kluyveri (strain NBRC 12016).